The primary structure comprises 126 residues: Small ribosomal subunit protein uS13 (126 aa).

Residues 92 to 126 (HRRGLPVRGQRTKTNARTRKGPKKTVAGKKKATRK) are disordered.

Belongs to the universal ribosomal protein uS13 family. Part of the 30S ribosomal subunit. Forms a loose heterodimer with protein S19. Forms two bridges to the 50S subunit in the 70S ribosome.

Functionally, located at the top of the head of the 30S subunit, it contacts several helices of the 16S rRNA. In the 70S ribosome it contacts the 23S rRNA (bridge B1a) and protein L5 of the 50S subunit (bridge B1b), connecting the 2 subunits; these bridges are implicated in subunit movement. Contacts the tRNAs in the A and P-sites. In Deinococcus deserti (strain DSM 17065 / CIP 109153 / LMG 22923 / VCD115), this protein is Small ribosomal subunit protein uS13.